The sequence spans 155 residues: SsrA-binding protein (155 aa).

The protein belongs to the SmpB family.

Its subcellular location is the cytoplasm. Its function is as follows. Required for rescue of stalled ribosomes mediated by trans-translation. Binds to transfer-messenger RNA (tmRNA), required for stable association of tmRNA with ribosomes. tmRNA and SmpB together mimic tRNA shape, replacing the anticodon stem-loop with SmpB. tmRNA is encoded by the ssrA gene; the 2 termini fold to resemble tRNA(Ala) and it encodes a 'tag peptide', a short internal open reading frame. During trans-translation Ala-aminoacylated tmRNA acts like a tRNA, entering the A-site of stalled ribosomes, displacing the stalled mRNA. The ribosome then switches to translate the ORF on the tmRNA; the nascent peptide is terminated with the 'tag peptide' encoded by the tmRNA and targeted for degradation. The ribosome is freed to recommence translation, which seems to be the essential function of trans-translation. The sequence is that of SsrA-binding protein from Helicobacter hepaticus (strain ATCC 51449 / 3B1).